Consider the following 126-residue polypeptide: Large ribosomal subunit protein bL12 (126 aa).

The protein belongs to the bacterial ribosomal protein bL12 family. Homodimer. Part of the ribosomal stalk of the 50S ribosomal subunit. Forms a multimeric L10(L12)X complex, where L10 forms an elongated spine to which 2 to 4 L12 dimers bind in a sequential fashion. Binds GTP-bound translation factors.

Forms part of the ribosomal stalk which helps the ribosome interact with GTP-bound translation factors. Is thus essential for accurate translation. The sequence is that of Large ribosomal subunit protein bL12 from Geotalea daltonii (strain DSM 22248 / JCM 15807 / FRC-32) (Geobacter daltonii).